A 1028-amino-acid chain; its full sequence is Endosome/lysosome-associated apoptosis and autophagy regulator family member 2 (1028 aa).

Positions 1-47 (MLLLTLRRAKGRDRGRPAGGPRRALSLPWSPAWICCWALAGCQAVWA) are cleaved as a signal peptide. Residues 48–928 (GDSSSSGRPL…TCETVDFWLK (881 aa)) are Extracellular-facing. A glycan (N-linked (GlcNAc...) asparagine) is linked at Asn-168. Intrachain disulfides connect Cys-292-Cys-309, Cys-322-Cys-345, and Cys-325-Cys-357. N-linked (GlcNAc...) asparagine glycans are attached at residues Asn-404 and Asn-690. In terms of domain architecture, MRH spans 671–876 (SDCFFYHEKE…LWESAEACPL (206 aa)). 4 disulfide bridges follow: Cys-673–Cys-719, Cys-729–Cys-757, Cys-826–Cys-862, and Cys-838–Cys-874. Residues 929-949 (VGAGVGAFTAVLLVALTCYFW) traverse the membrane as a helical segment. Topologically, residues 950 to 1028 (KKNQKLEYKY…QLKSSRCPNI (79 aa)) are cytoplasmic. Position 1017 is a phosphoserine (Ser-1017).

It belongs to the ELAPOR family.

It localises to the cell membrane. Its function is as follows. Functions as a regulator of the BMP signaling pathway and may be involved in epidermal differentiation. The chain is Endosome/lysosome-associated apoptosis and autophagy regulator family member 2 from Mus musculus (Mouse).